A 117-amino-acid chain; its full sequence is MDKKSARLRRAARTRHQIRHNGVHRLCVHRTPRHIYAQVIAPNGSEVVAAASTVEVELAKDLKGTGNVDAAVAIGKVIAERAKAKGVSEVAFDRSGFKYHGRVKALADAAREGGLQF.

Belongs to the universal ribosomal protein uL18 family. As to quaternary structure, part of the 50S ribosomal subunit; part of the 5S rRNA/L5/L18/L25 subcomplex. Contacts the 5S and 23S rRNAs.

This is one of the proteins that bind and probably mediate the attachment of the 5S RNA into the large ribosomal subunit, where it forms part of the central protuberance. In Thioalkalivibrio sulfidiphilus (strain HL-EbGR7), this protein is Large ribosomal subunit protein uL18.